Here is a 508-residue protein sequence, read N- to C-terminus: Aromatase (508 aa).

Residue C437 participates in heme binding.

The protein belongs to the cytochrome P450 family. Heme is required as a cofactor.

The protein resides in the membrane. The catalysed reaction is testosterone + 3 reduced [NADPH--hemoprotein reductase] + 3 O2 = 17beta-estradiol + formate + 3 oxidized [NADPH--hemoprotein reductase] + 4 H2O + 4 H(+). It catalyses the reaction androst-4-ene-3,17-dione + 3 reduced [NADPH--hemoprotein reductase] + 3 O2 = estrone + formate + 3 oxidized [NADPH--hemoprotein reductase] + 4 H2O + 4 H(+). Catalyzes the formation of aromatic C18 estrogens from C19 androgens. This is Aromatase (Cyp19a1) from Rattus norvegicus (Rat).